Reading from the N-terminus, the 355-residue chain is Alanine racemase (355 aa).

The active-site Proton acceptor; specific for D-alanine is K34. The residue at position 34 (K34) is an N6-(pyridoxal phosphate)lysine. R133 contributes to the substrate binding site. The active-site Proton acceptor; specific for L-alanine is the Y249. M297 contacts substrate.

Belongs to the alanine racemase family. Pyridoxal 5'-phosphate serves as cofactor.

It carries out the reaction L-alanine = D-alanine. It participates in amino-acid biosynthesis; D-alanine biosynthesis; D-alanine from L-alanine: step 1/1. In terms of biological role, catalyzes the interconversion of L-alanine and D-alanine. May also act on other amino acids. The chain is Alanine racemase (alr) from Rickettsia africae (strain ESF-5).